We begin with the raw amino-acid sequence, 490 residues long: MARFEEQKLYIGGRYVEASSGATFETINPANGEVLAKVQRASREDVERAVQSAVEGQKVWAAMTAMQRSRILRRAVDILRERNDELAALETLDTGKPLAETRSVDIVTGADVLEYYAGLVPAIEGEQIPLRETSFVYTRREPLGVVAGIGAWNYPVQIALWKSAPALAAGNAMIFKPSEVTPLTTLKLAEIYTEAGVPDGVFNVLTGSGREVGQWLTEHPLIEKISFTGGTSTGKKVMASASSSSLKEVTMELGGKSPLIIFPDADLDRAADIAVMANFFSSGQVCTNGTRVFIHRSQQARFEAKVLERVQRIRLGDPQDENTNFGPLVSFPHMESVLGYIESGKAQKARLLCGGERVTDGAFGNGAYVAPTVFTDCSDDMTIVREEIFGPVMSILVYDDEDEAIRRANDTEYGLAAGVVTQDLARAHRAIHRLEAGICWINTWGESPAEMPVGGYKQSGVGRENGLTTLAHYTRIKSVQVELGDYASVF.

K(+)-binding residues include threonine 26, isoleucine 27, and aspartate 93. NAD(+) is bound at residue 150–152; sequence GAW. Lysine 162 acts as the Charge relay system in catalysis. 176–179 is a binding site for NAD(+); it reads KPSE. Position 180 (valine 180) interacts with K(+). Residue 230 to 233 coordinates NAD(+); sequence GTST. Leucine 246 is a K(+) binding site. Glutamate 252 serves as the catalytic Proton acceptor. NAD(+) is bound by residues glycine 254, cysteine 286, and glutamate 387. Cysteine 286 acts as the Nucleophile in catalysis. Cysteine 286 bears the Cysteine sulfenic acid (-SOH) mark. Residues lysine 457 and glycine 460 each coordinate K(+). Catalysis depends on glutamate 464, which acts as the Charge relay system.

It belongs to the aldehyde dehydrogenase family. As to quaternary structure, dimer of dimers. Requires K(+) as cofactor.

It carries out the reaction betaine aldehyde + NAD(+) + H2O = glycine betaine + NADH + 2 H(+). Its pathway is amine and polyamine biosynthesis; betaine biosynthesis via choline pathway; betaine from betaine aldehyde: step 1/1. Functionally, involved in the biosynthesis of the osmoprotectant glycine betaine. Catalyzes the irreversible oxidation of betaine aldehyde to the corresponding acid. The sequence is that of Betaine aldehyde dehydrogenase from Pseudomonas aeruginosa (strain UCBPP-PA14).